Here is a 60-residue protein sequence, read N- to C-terminus: Large ribosomal subunit protein uL30 (60 aa).

Belongs to the universal ribosomal protein uL30 family. In terms of assembly, part of the 50S ribosomal subunit.

In Shewanella baltica (strain OS223), this protein is Large ribosomal subunit protein uL30.